A 335-amino-acid polypeptide reads, in one-letter code: Phosphate acyltransferase (335 aa).

This sequence belongs to the PlsX family. In terms of assembly, homodimer. Probably interacts with PlsY.

It localises to the cytoplasm. The enzyme catalyses a fatty acyl-[ACP] + phosphate = an acyl phosphate + holo-[ACP]. Its pathway is lipid metabolism; phospholipid metabolism. Catalyzes the reversible formation of acyl-phosphate (acyl-PO(4)) from acyl-[acyl-carrier-protein] (acyl-ACP). This enzyme utilizes acyl-ACP as fatty acyl donor, but not acyl-CoA. The chain is Phosphate acyltransferase from Desulfitobacterium hafniense (strain Y51).